The primary structure comprises 151 residues: Superoxide dismutase [Cu-Zn] 4 (151 aa).

His45, His47, and His62 together coordinate Cu cation. A disulfide bridge links Cys56 with Cys145. The Zn(2+) site is built by His62, His70, His79, and Asp82. A Cu cation-binding site is contributed by His120.

The protein belongs to the Cu-Zn superoxide dismutase family. In terms of assembly, homodimer. Cu cation serves as cofactor. Zn(2+) is required as a cofactor.

The protein resides in the cytoplasm. It carries out the reaction 2 superoxide + 2 H(+) = H2O2 + O2. Destroys radicals which are normally produced within the cells and which are toxic to biological systems. Protects spores from cellular damage caused by UV LIGHT. This chain is Superoxide dismutase [Cu-Zn] 4 (sodD), found in Dictyostelium discoideum (Social amoeba).